The following is an 88-amino-acid chain: uncharacterized protein (88 aa).

The interval Ala-1 to Glu-54 is disordered. The span at Gly-16–Pro-53 shows a compositional bias: acidic residues.

Predominantly in developing fruit.

This is an uncharacterized protein from Fragaria ananassa (Strawberry).